A 347-amino-acid chain; its full sequence is NADH-ubiquinone oxidoreductase chain 2 (347 aa).

A run of 10 helical transmembrane segments spans residues 13–33 (IILG…WIGF), 59–79 (YFLT…TNLL), 96–116 (AVMT…FWVP), 122–142 (IPLS…LSVL), 149–169 (VSPT…GWGG), 178–198 (ILAY…AYNP), 201–221 (TLLN…LFMF), 247–267 (IMLS…WMII), 274–294 (ESLL…YFYM), and 323–343 (VPLL…APAL).

Belongs to the complex I subunit 2 family. As to quaternary structure, core subunit of respiratory chain NADH dehydrogenase (Complex I) which is composed of 45 different subunits. Interacts with TMEM242.

It localises to the mitochondrion inner membrane. The enzyme catalyses a ubiquinone + NADH + 5 H(+)(in) = a ubiquinol + NAD(+) + 4 H(+)(out). In terms of biological role, core subunit of the mitochondrial membrane respiratory chain NADH dehydrogenase (Complex I) which catalyzes electron transfer from NADH through the respiratory chain, using ubiquinone as an electron acceptor. Essential for the catalytic activity and assembly of complex I. In Megaderma spasma (Lesser false vampire bat), this protein is NADH-ubiquinone oxidoreductase chain 2.